The following is a 370-amino-acid chain: Histidinol-phosphate aminotransferase (370 aa).

K220 is subject to N6-(pyridoxal phosphate)lysine.

Belongs to the class-II pyridoxal-phosphate-dependent aminotransferase family. Histidinol-phosphate aminotransferase subfamily. Homodimer. Requires pyridoxal 5'-phosphate as cofactor.

The catalysed reaction is L-histidinol phosphate + 2-oxoglutarate = 3-(imidazol-4-yl)-2-oxopropyl phosphate + L-glutamate. The protein operates within amino-acid biosynthesis; L-histidine biosynthesis; L-histidine from 5-phospho-alpha-D-ribose 1-diphosphate: step 7/9. In Granulibacter bethesdensis (strain ATCC BAA-1260 / CGDNIH1), this protein is Histidinol-phosphate aminotransferase.